Consider the following 106-residue polypeptide: MAEEVPEFKITIFTDKGRSTISGTEYPLPILPYPAPYTFRLSGYTIEGPILTNKEFKVITGKIEYGGEEFDIPPSSKGSWRRADNLMNLIFVTIYLSRQPKKVFHY.

It belongs to the csb family.

This is an uncharacterized protein from Dictyostelium discoideum (Social amoeba).